Reading from the N-terminus, the 467-residue chain is ATP-dependent protease ATPase subunit HslU (467 aa).

Residues Val-22 and 64–69 (GVGKTE) each bind ATP. A disordered region spans residues 146–185 (KASNNSNPLESLLGGAIPNFGNNDDEEEETPTEEIKTKRS). A compositionally biased stretch (acidic residues) spans 168 to 177 (NDDEEEETPT). 3 residues coordinate ATP: Asp-280, Glu-345, and Arg-417.

Belongs to the ClpX chaperone family. HslU subfamily. As to quaternary structure, a double ring-shaped homohexamer of HslV is capped on each side by a ring-shaped HslU homohexamer. The assembly of the HslU/HslV complex is dependent on binding of ATP.

Its subcellular location is the cytoplasm. In terms of biological role, ATPase subunit of a proteasome-like degradation complex; this subunit has chaperone activity. The binding of ATP and its subsequent hydrolysis by HslU are essential for unfolding of protein substrates subsequently hydrolyzed by HslV. HslU recognizes the N-terminal part of its protein substrates and unfolds these before they are guided to HslV for hydrolysis. This Staphylococcus haemolyticus (strain JCSC1435) protein is ATP-dependent protease ATPase subunit HslU.